We begin with the raw amino-acid sequence, 347 residues long: MEIDMADKTNKFKTDIERKQFESLPWVEKYRPKNLDDLIAHEDITQTITKLIDNNTLPHLLFYGPPGTGKTSTIQAIARKLYGDNYSRMVLELNASDDRGIDVVREQIKTFASSMFFFNTTVPYKLIILDEADSMTNIAQTALRRVIEKYTKTTRFCIVCNYVIKIIPALQSRCTRFRFSPLPTPPTEIRLKEIIEKENVKVDSKAMNAVLELGCGDMRKCLNILQSVSMSSIDNNITEEAIYKCTGYPMPSDIELMVDWLLNSDYEEAFQNISDLKKKKGLSLNDIIATLQKFVVQIDLDNVILCKLLSHLSDIEYNLSIGSSEKLQLGSLVGCFQLSRDDELLHN.

64 to 71 provides a ligand contact to ATP; it reads GPPGTGKT.

It belongs to the activator 1 small subunits family. As to quaternary structure, heteropentamer of various rfc subunits that forms a complex (RFC) with PCNA in the presence of ATP.

It is found in the nucleus. In terms of biological role, the elongation of primed DNA templates by DNA polymerase delta and epsilon requires the action of the accessory proteins PCNA and activator 1. This Dictyostelium discoideum (Social amoeba) protein is Probable replication factor C subunit 5 (rfc5).